The sequence spans 119 residues: Holo-[acyl-carrier-protein] synthase (119 aa).

Mg(2+) contacts are provided by Asp8 and Glu59.

Belongs to the P-Pant transferase superfamily. AcpS family. The cofactor is Mg(2+).

It localises to the cytoplasm. The enzyme catalyses apo-[ACP] + CoA = holo-[ACP] + adenosine 3',5'-bisphosphate + H(+). Its function is as follows. Transfers the 4'-phosphopantetheine moiety from coenzyme A to a Ser of acyl-carrier-protein. This chain is Holo-[acyl-carrier-protein] synthase, found in Lactococcus lactis subsp. cremoris (strain SK11).